The following is a 422-amino-acid chain: Glucose-1-phosphate adenylyltransferase (422 aa).

Alpha-D-glucose 1-phosphate-binding positions include Tyr109, Gly175, 190 to 191 (EK), and Ser208.

The protein belongs to the bacterial/plant glucose-1-phosphate adenylyltransferase family. As to quaternary structure, homotetramer.

The catalysed reaction is alpha-D-glucose 1-phosphate + ATP + H(+) = ADP-alpha-D-glucose + diphosphate. It functions in the pathway glycan biosynthesis; glycogen biosynthesis. In terms of biological role, involved in the biosynthesis of ADP-glucose, a building block required for the elongation reactions to produce glycogen. Catalyzes the reaction between ATP and alpha-D-glucose 1-phosphate (G1P) to produce pyrophosphate and ADP-Glc. The protein is Glucose-1-phosphate adenylyltransferase of Shewanella amazonensis (strain ATCC BAA-1098 / SB2B).